A 379-amino-acid polypeptide reads, in one-letter code: Gonadotropin-releasing hormone II receptor (379 aa).

Topologically, residues 1-40 (MSAGNGTPWGSAAGEESWAASGVAVEGSELPTFSAAAKVR) are extracellular. The chain crosses the membrane as a helical span at residues 41–60 (VGVTIVLFVSSAGGNLAVLW). Residues 61 to 76 (SVTRPQPSQLRPSPVR) are Cytoplasmic-facing. A helical transmembrane segment spans residues 77–96 (TLFAHLAAADLLVTFVVMPL). Residues 97–114 (DATWNITVQWLAEDIACR) lie on the Extracellular side of the membrane. N-linked (GlcNAc...) asparagine glycosylation is present at N101. A disulfide bridge links C113 with C188. A helical membrane pass occupies residues 115–136 (TLMFLKLMAMYSAAFLPVVIGL). Topologically, residues 137–160 (DRQAAVLNPLGSRSGVRKLLGAAW) are cytoplasmic. A helical membrane pass occupies residues 161-178 (GLSFLLALPQLFLFHTVH). The Extracellular segment spans residues 179 to 204 (RAGPVPFTQCVTKGSFKARWQETTYN). A helical membrane pass occupies residues 205–224 (LFTFRCLFLLPLTAMAICYS). Over 225–278 (HIVLSVSSPQTRKGSHAPAGEFALCRSFDNCPRVRLWALRLALLILLTFILCWT) the chain is Cytoplasmic. A helical membrane pass occupies residues 279–297 (PYYLLGLWYWFSPTMLTEV). The Extracellular portion of the chain corresponds to 298 to 303 (PPSLSH). Residues 304 to 323 (ILFLFGLLNAPLDPLLYGAF) form a helical membrane-spanning segment. At 324-379 (TLGCQRGHQELSIDSSNEGSGRMLQQEIHALRQQEVQKTVTSRSAGETKDISITSI) the chain is on the cytoplasmic side.

This sequence belongs to the G-protein coupled receptor 1 family. Phosphorylated on the C-terminal cytoplasmic tail.

It localises to the cell membrane. Its function is as follows. Receptor for gonadotropin releasing hormone II (GnRH II). This receptor mediates its action by association with G proteins that activate a phosphatidylinositol-calcium second messenger system. The protein is Gonadotropin-releasing hormone II receptor (GNRHR2) of Macaca mulatta (Rhesus macaque).